The chain runs to 365 residues: uncharacterized protein (365 aa).

Topologically, residues 1 to 133 (MVLAKQWVLK…RKLDKNKVGK (133 aa)) are cytoplasmic. The helical transmembrane segment at 134-154 (LWWYLSVLGGTSLTAYFIFFT) threads the bilayer. The Extracellular segment spans residues 155 to 169 (YAQLQEREEDYGKVY). The chain crosses the membrane as a helical span at residues 170–190 (LISGAAGAVGTVCIQLALNVF). Topologically, residues 191-365 (KASKVIAIAG…KLITKVNNEE (175 aa)) are cytoplasmic.

It localises to the membrane. This is an uncharacterized protein from Saccharomyces cerevisiae (strain ATCC 204508 / S288c) (Baker's yeast).